We begin with the raw amino-acid sequence, 361 residues long: Phospho-N-acetylmuramoyl-pentapeptide-transferase (361 aa).

10 helical membrane passes run 26–46 (SILA…VLIQ), 73–93 (TMGG…WGDL), 98–118 (VWLV…DDWI), 139–159 (IFGL…AAVT), 168–188 (IALP…IVGF), 200–220 (GLAI…AYAS), 237–257 (AGDL…FLWF), 264–284 (VFMG…IAVI), 289–309 (LVLV…IIQV), and 339–359 (VIVR…ATLK).

It belongs to the glycosyltransferase 4 family. MraY subfamily. The cofactor is Mg(2+).

The protein localises to the cell inner membrane. The catalysed reaction is UDP-N-acetyl-alpha-D-muramoyl-L-alanyl-gamma-D-glutamyl-meso-2,6-diaminopimeloyl-D-alanyl-D-alanine + di-trans,octa-cis-undecaprenyl phosphate = di-trans,octa-cis-undecaprenyl diphospho-N-acetyl-alpha-D-muramoyl-L-alanyl-D-glutamyl-meso-2,6-diaminopimeloyl-D-alanyl-D-alanine + UMP. It participates in cell wall biogenesis; peptidoglycan biosynthesis. Functionally, catalyzes the initial step of the lipid cycle reactions in the biosynthesis of the cell wall peptidoglycan: transfers peptidoglycan precursor phospho-MurNAc-pentapeptide from UDP-MurNAc-pentapeptide onto the lipid carrier undecaprenyl phosphate, yielding undecaprenyl-pyrophosphoryl-MurNAc-pentapeptide, known as lipid I. This chain is Phospho-N-acetylmuramoyl-pentapeptide-transferase, found in Xylella fastidiosa (strain M12).